A 135-amino-acid polypeptide reads, in one-letter code: Protein Wnt-7b (135 aa).

2 cysteine pairs are disulfide-bonded: cysteine 3-cysteine 17 and cysteine 5-cysteine 12. Residue serine 9 is the site of O-palmitoleoyl serine; by PORCN attachment. Residues 41-69 are disordered linker; it reads VEVVRANRLRQPTFLKIKKVRSYQKPMET. 3 disulfide bridges follow: cysteine 81-cysteine 112, cysteine 97-cysteine 107, and cysteine 134-cysteine 135. The N-linked (GlcNAc...) asparagine glycan is linked to asparagine 98.

The protein belongs to the Wnt family. In terms of processing, palmitoleoylation is required for efficient binding to frizzled receptors. Depalmitoleoylation leads to Wnt signaling pathway inhibition. As to expression, in adults, in brain and lung.

Its subcellular location is the secreted. The protein resides in the extracellular space. It is found in the extracellular matrix. Its function is as follows. Ligand for members of the frizzled family of seven transmembrane receptors that functions in the canonical Wnt/beta-catenin signaling pathway. Required for normal fusion of the chorion and the allantois during placenta development. Required for central nervous system (CNS) angiogenesis and blood-brain barrier regulation. This chain is Protein Wnt-7b (wnt7b), found in Xenopus laevis (African clawed frog).